The sequence spans 288 residues: UTP--glucose-1-phosphate uridylyltransferase (288 aa).

The protein belongs to the UDPGP type 2 family.

The enzyme catalyses alpha-D-glucose 1-phosphate + UTP + H(+) = UDP-alpha-D-glucose + diphosphate. It functions in the pathway glycolipid metabolism; diglucosyl-diacylglycerol biosynthesis. Catalyzes the formation of UDP-glucose from glucose-1-phosphate and UTP. This is an intermediate step in the biosynthesis of diglucosyl-diacylglycerol (Glc2-DAG), i.e. the predominant glycolipid found in the S.aureus membrane, which is also used as a membrane anchor for lipoteichoic acid (LTA). The protein is UTP--glucose-1-phosphate uridylyltransferase (gtaB) of Staphylococcus aureus (strain USA300).